We begin with the raw amino-acid sequence, 409 residues long: Phosphatidylglycerol--prolipoprotein diacylglyceryl transferase (409 aa).

The next 4 helical transmembrane spans lie at 18-38, 48-68, 93-113, and 119-139; these read PVPLRAYALMIIIGVFVAVFV, MDPMVASEVAYWAVPFGIVGA, IWNGGLGIWGAIAGGAFGAWL, and GISLALFGDAAAPGIILAQAI. Position 141 (Arg-141) interacts with a 1,2-diacyl-sn-glycero-3-phospho-(1'-sn-glycerol). 2 helical membrane-spanning segments follow: residues 177 to 197 and 234 to 254; these read QPTFLYECLWNLVVAGILLVV and ILGLRVNIWTSIVVCLGALLA. The disordered stretch occupies residues 273–409; sequence ALGIARSRPA…AVPPEEPQLP (137 aa). Composition is skewed to low complexity over residues 297–309, 320–335, and 348–375; these read AAAPDSAGPDSAA, PDLGGPDPADPGSAGS, and TATTATTATTATTATTATTATTATTATT.

It belongs to the Lgt family.

The protein resides in the cell membrane. The catalysed reaction is L-cysteinyl-[prolipoprotein] + a 1,2-diacyl-sn-glycero-3-phospho-(1'-sn-glycerol) = an S-1,2-diacyl-sn-glyceryl-L-cysteinyl-[prolipoprotein] + sn-glycerol 1-phosphate + H(+). It participates in protein modification; lipoprotein biosynthesis (diacylglyceryl transfer). Functionally, catalyzes the transfer of the diacylglyceryl group from phosphatidylglycerol to the sulfhydryl group of the N-terminal cysteine of a prolipoprotein, the first step in the formation of mature lipoproteins. The sequence is that of Phosphatidylglycerol--prolipoprotein diacylglyceryl transferase from Frankia casuarinae (strain DSM 45818 / CECT 9043 / HFP020203 / CcI3).